The following is a 116-amino-acid chain: Large ribosomal subunit protein bL17 (116 aa).

Belongs to the bacterial ribosomal protein bL17 family. In terms of assembly, part of the 50S ribosomal subunit. Contacts protein L32.

This chain is Large ribosomal subunit protein bL17, found in Gloeobacter violaceus (strain ATCC 29082 / PCC 7421).